Here is an 80-residue protein sequence, read N- to C-terminus: Penaeidin-3 (80 aa).

The signal sequence occupies residues 1 to 19 (MRLVVCLVYLVSFALVCQG). Gln-20 is subject to Pyrrolidone carboxylic acid. Disulfide bonds link Cys-54–Cys-67, Cys-57–Cys-74, and Cys-68–Cys-75.

Belongs to the penaeidin family. In terms of processing, the N-terminus forms pyrrolidone carboxylic acid. In terms of tissue distribution, strongly expressed in hemocytes, and to a lesser extent in heart, muscle, gills, intestine and eyestalk. Lowest expression in hepatopancreas.

The protein localises to the cytoplasmic granule. Antibacterial and antifungal activity. Presents chitin-binding activity. This chain is Penaeidin-3, found in Penaeus indicus (Indian white prawn).